The sequence spans 241 residues: UDP-2,3-diacylglucosamine hydrolase (241 aa).

Positions 8, 10, 41, 79, and 114 each coordinate Mn(2+). 79–80 is a substrate binding site; it reads NR. Substrate is bound by residues D122, S160, K167, and H195. Residues H195 and H197 each coordinate Mn(2+).

The protein belongs to the LpxH family. The cofactor is Mn(2+).

It is found in the cell inner membrane. The catalysed reaction is UDP-2-N,3-O-bis[(3R)-3-hydroxytetradecanoyl]-alpha-D-glucosamine + H2O = 2-N,3-O-bis[(3R)-3-hydroxytetradecanoyl]-alpha-D-glucosaminyl 1-phosphate + UMP + 2 H(+). It participates in glycolipid biosynthesis; lipid IV(A) biosynthesis; lipid IV(A) from (3R)-3-hydroxytetradecanoyl-[acyl-carrier-protein] and UDP-N-acetyl-alpha-D-glucosamine: step 4/6. Its function is as follows. Hydrolyzes the pyrophosphate bond of UDP-2,3-diacylglucosamine to yield 2,3-diacylglucosamine 1-phosphate (lipid X) and UMP by catalyzing the attack of water at the alpha-P atom. Involved in the biosynthesis of lipid A, a phosphorylated glycolipid that anchors the lipopolysaccharide to the outer membrane of the cell. The chain is UDP-2,3-diacylglucosamine hydrolase from Azotobacter vinelandii (strain DJ / ATCC BAA-1303).